Consider the following 192-residue polypeptide: MTIKNKGLIIILSSPSGTGKSSLAKALLKIDNNLRLSISATTRKPRLGEVEGINYYFKTKLEFEELVKQNKFLEYAKIYDNYYGTPKEYVEMLLNQGLDVLFDIDWQGAKSIKKNATNVVAIFILPPSIEILEQRLRNRATDNEEAIKLRMQSAQNEMSHANEYDYVITNDDFDQTLKKIHEIIVAEREKAF.

A Guanylate kinase-like domain is found at Gly7 to Val185. Ser14–Ser21 serves as a coordination point for ATP.

The protein belongs to the guanylate kinase family.

The protein resides in the cytoplasm. The catalysed reaction is GMP + ATP = GDP + ADP. Its function is as follows. Essential for recycling GMP and indirectly, cGMP. The protein is Guanylate kinase of Rickettsia felis (strain ATCC VR-1525 / URRWXCal2) (Rickettsia azadi).